We begin with the raw amino-acid sequence, 277 residues long: Large ribosomal subunit protein uL2 (277 aa).

Disordered stretches follow at residues 37–58 and 222–277; these read LHSK…GGGH and GVAM…NRRR. Basic residues predominate over residues 268 to 277; sequence VRRRKQNRRR.

This sequence belongs to the universal ribosomal protein uL2 family. As to quaternary structure, part of the 50S ribosomal subunit. Forms a bridge to the 30S subunit in the 70S ribosome.

Its function is as follows. One of the primary rRNA binding proteins. Required for association of the 30S and 50S subunits to form the 70S ribosome, for tRNA binding and peptide bond formation. It has been suggested to have peptidyltransferase activity; this is somewhat controversial. Makes several contacts with the 16S rRNA in the 70S ribosome. The chain is Large ribosomal subunit protein uL2 from Parafrankia sp. (strain EAN1pec).